Here is a 293-residue protein sequence, read N- to C-terminus: HTH-type transcriptional regulator ArgP (293 aa).

The HTH lysR-type domain maps to 4 to 60 (PDYRTLQALDAVIRERGFERAAQKLCITQSAVSQRIKQLENLFGQPLLVRTIPPHPT). Positions 21 to 40 (FERAAQKLCITQSAVSQRIK) form a DNA-binding region, H-T-H motif.

This sequence belongs to the LysR transcriptional regulatory family. In terms of assembly, homodimer.

In terms of biological role, controls the transcription of genes involved in arginine and lysine metabolism. This is HTH-type transcriptional regulator ArgP from Sodalis glossinidius (strain morsitans).